The primary structure comprises 334 residues: Malate dehydrogenase, cytoplasmic (334 aa).

Position 2 is an N-acetylserine (Ser2). Residues 11 to 17 (GAAGQIA) and Asp42 contribute to the NAD(+) site. Residues Arg92 and Arg98 each contribute to the substrate site. Asn105 provides a ligand contact to NAD(+). Lys110 carries the post-translational modification N6-succinyllysine. Gln112 contacts NAD(+). N6-acetyllysine occurs at positions 118 and 121. 129 to 131 (VGN) is an NAD(+) binding site. Substrate is bound by residues Asn131 and Arg162. His187 acts as the Proton acceptor in catalysis. Residue Lys214 is modified to N6-succinyllysine. At Ser217 the chain carries Phosphoserine. An Omega-N-methylarginine modification is found at Arg230. A Phosphoserine modification is found at Ser241. An N6-acetyllysine; alternate modification is found at Lys298. The residue at position 298 (Lys298) is an N6-succinyllysine; alternate. A Phosphoserine modification is found at Ser309. Position 318 is an N6-succinyllysine (Lys318). A phosphoserine mark is found at Ser332 and Ser333.

Belongs to the LDH/MDH superfamily. MDH type 2 family. As to quaternary structure, homodimer. ISGylated. Post-translationally, acetylation at Lys-118 dramatically enhances enzymatic activity and promotes adipogenic differentiation.

The protein localises to the cytoplasm. It localises to the cytosol. The catalysed reaction is (S)-malate + NAD(+) = oxaloacetate + NADH + H(+). It carries out the reaction (2R)-2-hydroxy-3-(4-hydroxyphenyl)propanoate + NAD(+) = 3-(4-hydroxyphenyl)pyruvate + NADH + H(+). The enzyme catalyses (S)-2-hydroxyglutarate + NAD(+) = 2-oxoglutarate + NADH + H(+). Functionally, catalyzes the reduction of aromatic alpha-keto acids in the presence of NADH. Plays essential roles in the malate-aspartate shuttle and the tricarboxylic acid cycle, important in mitochondrial NADH supply for oxidative phosphorylation. Catalyzes the reduction of 2-oxoglutarate to 2-hydroxyglutarate, leading to elevated reactive oxygen species (ROS). In Homo sapiens (Human), this protein is Malate dehydrogenase, cytoplasmic.